The primary structure comprises 483 residues: Regulatory protein ViaA (483 aa).

It belongs to the ViaA family. Homodimer. Interacts with RavA.

It is found in the cytoplasm. In terms of biological role, component of the RavA-ViaA chaperone complex, which may act on the membrane to optimize the function of some of the respiratory chains. ViaA stimulates the ATPase activity of RavA. The protein is Regulatory protein ViaA of Escherichia coli O127:H6 (strain E2348/69 / EPEC).